A 471-amino-acid polypeptide reads, in one-letter code: Type 2 glycosyltransferase (471 aa).

Residues I4–V24 form a helical membrane-spanning segment. 3 N-linked (GlcNAc...) asparagine glycosylation sites follow: N29, N88, and N222. The next 3 membrane-spanning stretches (helical) occupy residues C305 to L325, M339 to G359, and V368 to G388. N-linked (GlcNAc...) asparagine glycosylation occurs at N458.

The protein belongs to the GT2 glycosyltransferase family.

It localises to the cell membrane. Glycosyltransferase involved in the maintenance of the outermost surface of the fungal cell wall. Likely functions in the synthesis of a currently unknown, potentially minor but widespread, extracellular or outer cell wall polysaccharide which plays a key role in facilitating many interactions between plants and fungi by enabling hyphal growth on solid matrices. In Zymoseptoria tritici (strain CBS 115943 / IPO323) (Speckled leaf blotch fungus), this protein is Type 2 glycosyltransferase.